The sequence spans 123 residues: Large ribosomal subunit protein bL12 (123 aa).

The protein belongs to the bacterial ribosomal protein bL12 family. In terms of assembly, homodimer. Part of the ribosomal stalk of the 50S ribosomal subunit. Forms a multimeric L10(L12)X complex, where L10 forms an elongated spine to which 2 to 4 L12 dimers bind in a sequential fashion. Binds GTP-bound translation factors.

Its function is as follows. Forms part of the ribosomal stalk which helps the ribosome interact with GTP-bound translation factors. Is thus essential for accurate translation. The polypeptide is Large ribosomal subunit protein bL12 (Shewanella sp. (strain MR-4)).